The following is a 275-amino-acid chain: Exosome complex component RRP40 (275 aa).

Alanine 2 carries the post-translational modification N-acetylalanine. A Glycyl lysine isopeptide (Lys-Gly) (interchain with G-Cter in SUMO2) cross-link involves residue lysine 151.

This sequence belongs to the RRP40 family. As to quaternary structure, component of the RNA exosome core complex (Exo-9), composed of EXOSC1, EXOSC2, EXOSC3, EXOSC4, EXOSC5, EXOSC6, EXOSC7, EXOSC8 and EXOSC9; within the complex interacts with EXOSC5 and EXOSC9. The catalytically inactive RNA exosome core complex (Exo-9) associates with the catalytic subunit EXOSC10/RRP6. Exo-9 may associate with DIS3 to form the nucleolar exosome complex, or DIS3L to form the cytoplasmic exosome complex. Exo-9 is formed by a hexameric base ring consisting of the heterodimers EXOSC4-EXOSC9, EXOSC5-EXOSC8 and EXOSC6-EXOSC7, and a cap ring consisting of EXOSC1, EXOSC2 and EXOSC3. The RNA exosome complex associates with cofactors C1D/RRP47, MPHOSPH6/MPP6 and MTREX/MTR4. Interacts with MPHOSPH6/MPP6; the interaction is direct. Interacts with GTPBP1. Interacts with ZC3HAV1. Interacts with DDX17 only in the presence of ZC3HAV1 in an RNA-independent manner. Interacts with DHX36; this interaction occurs in a RNase-insensitive manner. Interacts with HBS1L isoform 2.

It localises to the cytoplasm. It is found in the nucleus. The protein resides in the nucleolus. In terms of biological role, non-catalytic component of the RNA exosome complex which has 3'-&gt;5' exoribonuclease activity and participates in a multitude of cellular RNA processing and degradation events. In the nucleus, the RNA exosome complex is involved in proper maturation of stable RNA species such as rRNA, snRNA and snoRNA, in the elimination of RNA processing by-products and non-coding 'pervasive' transcripts, such as antisense RNA species and promoter-upstream transcripts (PROMPTs), and of mRNAs with processing defects, thereby limiting or excluding their export to the cytoplasm. The RNA exosome may be involved in Ig class switch recombination (CSR) and/or Ig variable region somatic hypermutation (SHM) by targeting AICDA deamination activity to transcribed dsDNA substrates. In the cytoplasm, the RNA exosome complex is involved in general mRNA turnover and specifically degrades inherently unstable mRNAs containing AU-rich elements (AREs) within their 3' untranslated regions, and in RNA surveillance pathways, preventing translation of aberrant mRNAs. It seems to be involved in degradation of histone mRNA. The catalytic inactive RNA exosome core complex of 9 subunits (Exo-9) is proposed to play a pivotal role in the binding and presentation of RNA for ribonucleolysis, and to serve as a scaffold for the association with catalytic subunits and accessory proteins or complexes. EXOSC3 as peripheral part of the Exo-9 complex stabilizes the hexameric ring of RNase PH-domain subunits through contacts with EXOSC9 and EXOSC5. This is Exosome complex component RRP40 (EXOSC3) from Bos taurus (Bovine).